The chain runs to 268 residues: Tryptophan synthase alpha chain (268 aa).

Residues glutamate 49 and aspartate 60 each act as proton acceptor in the active site.

This sequence belongs to the TrpA family. As to quaternary structure, tetramer of two alpha and two beta chains.

It catalyses the reaction (1S,2R)-1-C-(indol-3-yl)glycerol 3-phosphate + L-serine = D-glyceraldehyde 3-phosphate + L-tryptophan + H2O. It participates in amino-acid biosynthesis; L-tryptophan biosynthesis; L-tryptophan from chorismate: step 5/5. Functionally, the alpha subunit is responsible for the aldol cleavage of indoleglycerol phosphate to indole and glyceraldehyde 3-phosphate. The sequence is that of Tryptophan synthase alpha chain from Vibrio cholerae serotype O1 (strain ATCC 39541 / Classical Ogawa 395 / O395).